We begin with the raw amino-acid sequence, 277 residues long: Small ribosomal subunit protein uS2 (277 aa).

Basic and acidic residues-rich tracts occupy residues 227–256 (QARA…RTEA) and 267–277 (SEAKAEGNTEA). The segment at 227-277 (QARAERQEAAAKEAAGDADKAPAEAERTEAPAEEAPAEAQSEAKAEGNTEA) is disordered.

It belongs to the universal ribosomal protein uS2 family.

The polypeptide is Small ribosomal subunit protein uS2 (Corynebacterium jeikeium (strain K411)).